Here is a 342-residue protein sequence, read N- to C-terminus: S-adenosylmethionine:tRNA ribosyltransferase-isomerase (342 aa).

The protein belongs to the QueA family. In terms of assembly, monomer.

It localises to the cytoplasm. It carries out the reaction 7-aminomethyl-7-carbaguanosine(34) in tRNA + S-adenosyl-L-methionine = epoxyqueuosine(34) in tRNA + adenine + L-methionine + 2 H(+). The protein operates within tRNA modification; tRNA-queuosine biosynthesis. Transfers and isomerizes the ribose moiety from AdoMet to the 7-aminomethyl group of 7-deazaguanine (preQ1-tRNA) to give epoxyqueuosine (oQ-tRNA). The protein is S-adenosylmethionine:tRNA ribosyltransferase-isomerase of Streptococcus pyogenes serotype M3 (strain ATCC BAA-595 / MGAS315).